Reading from the N-terminus, the 318-residue chain is Beta-ketoacyl-[acyl-carrier-protein] synthase III (318 aa).

Catalysis depends on residues C112 and H245. The segment at Q246–R250 is ACP-binding. N275 is an active-site residue.

Belongs to the thiolase-like superfamily. FabH family. In terms of assembly, homodimer.

It localises to the cytoplasm. It carries out the reaction malonyl-[ACP] + acetyl-CoA + H(+) = 3-oxobutanoyl-[ACP] + CO2 + CoA. It functions in the pathway lipid metabolism; fatty acid biosynthesis. Its function is as follows. Catalyzes the condensation reaction of fatty acid synthesis by the addition to an acyl acceptor of two carbons from malonyl-ACP. Catalyzes the first condensation reaction which initiates fatty acid synthesis and may therefore play a role in governing the total rate of fatty acid production. Possesses both acetoacetyl-ACP synthase and acetyl transacylase activities. Its substrate specificity determines the biosynthesis of branched-chain and/or straight-chain of fatty acids. This Blochmanniella floridana protein is Beta-ketoacyl-[acyl-carrier-protein] synthase III.